The chain runs to 463 residues: SCF E3 ubiquitin ligase complex F-box protein pof2 (463 aa).

An F-box domain is found at 1 to 42; it reads MRVPNEVCFNILSYLEADELRCKSTVCTSWRNFIIPTLWEKV. LRR repeat units lie at residues 145–170, 171–196, 198–220, 225–247, 249–271, 278–299, 304–326, 328–353, 354–378, and 380–405; these read CPNLKALNIGNCGLVEDTGMVQIIKR, CPYLNRLIIPNCRKLTDVSLQILSEK, DLIELDISGCEGFHNADTLSRLV, GLKELSMDGCTELSHFITFLNLN, ELDAMRALSLNNLPDLKDSDIEL, KLNSLFLSKCIGLTDSSLLSLT, SLTTLHLGHCYEITDIGVQCLLK, CKNITYIDFGGCLRLSDIAVSAIAKL, PYLQRVGLVKCICLTDLSVILLSGS, and SRNLERVHLSYCIGLTAKSVSYLMYN.

As to quaternary structure, part of a SCF E3 ubiquitin ligase complex. Interacts with skp1.

The protein localises to the mitochondrion. Its function is as follows. Involved in substrate recognition in ubiquitin-dependent degradation. This chain is SCF E3 ubiquitin ligase complex F-box protein pof2 (pof2), found in Schizosaccharomyces pombe (strain 972 / ATCC 24843) (Fission yeast).